The following is a 207-amino-acid chain: Small ribosomal subunit protein uS4 (207 aa).

An S4 RNA-binding domain is found at 96 to 156 (RRLDNVVYRL…EKFKTSSFIA (61 aa)).

Belongs to the universal ribosomal protein uS4 family. In terms of assembly, part of the 30S ribosomal subunit. Contacts protein S5. The interaction surface between S4 and S5 is involved in control of translational fidelity.

Functionally, one of the primary rRNA binding proteins, it binds directly to 16S rRNA where it nucleates assembly of the body of the 30S subunit. Its function is as follows. With S5 and S12 plays an important role in translational accuracy. The chain is Small ribosomal subunit protein uS4 from Leptospira interrogans serogroup Icterohaemorrhagiae serovar copenhageni (strain Fiocruz L1-130).